Here is a 349-residue protein sequence, read N- to C-terminus: Core protein VP7 (349 aa).

A glycan (N-linked (GlcNAc...) asparagine; by host) is linked at Asn-45.

Belongs to the orbivirus VP7 family. In terms of assembly, homotrimer.

It localises to the virion. In terms of biological role, major structural core protein; binds to structural protein VP3. Constitutes the surface of the AHSV core. This African horse sickness virus 6 (AHSV-6) protein is Core protein VP7 (Segment-7).